The following is a 262-amino-acid chain: Ornithine carbamoyltransferase (262 aa).

Carbamoyl phosphate contacts are provided by residues Ser-3–Arg-7, Gln-30, Arg-54, and His-81–Gln-84. L-ornithine-binding positions include Asn-114, Asp-178, and Ser-182 to Met-183. Residues His-219 to Pro-222 and Thr-247 each bind carbamoyl phosphate.

It belongs to the aspartate/ornithine carbamoyltransferase superfamily. OTCase family.

The protein resides in the cytoplasm. The catalysed reaction is carbamoyl phosphate + L-ornithine = L-citrulline + phosphate + H(+). It participates in amino-acid biosynthesis; L-arginine biosynthesis; L-arginine from L-ornithine and carbamoyl phosphate: step 1/3. Functionally, reversibly catalyzes the transfer of the carbamoyl group from carbamoyl phosphate (CP) to the N(epsilon) atom of ornithine (ORN) to produce L-citrulline. The polypeptide is Ornithine carbamoyltransferase (argF) (Neisseria mucosa).